The chain runs to 290 residues: Phosphate import ATP-binding protein PstB (290 aa).

Positions 43–285 constitute an ABC transporter domain; that stretch reads MSVRNLNVYY…PEHELTEAYI (243 aa). 75 to 82 serves as a coordination point for ATP; the sequence is GPSGCGKS.

Belongs to the ABC transporter superfamily. Phosphate importer (TC 3.A.1.7) family. As to quaternary structure, the complex is composed of two ATP-binding proteins (PstB), two transmembrane proteins (PstC and PstA) and a solute-binding protein (PstS).

Its subcellular location is the cell inner membrane. It carries out the reaction phosphate(out) + ATP + H2O = ADP + 2 phosphate(in) + H(+). Part of the ABC transporter complex PstSACB involved in phosphate import. Responsible for energy coupling to the transport system. The polypeptide is Phosphate import ATP-binding protein PstB (Pseudoalteromonas atlantica (strain T6c / ATCC BAA-1087)).